The chain runs to 159 residues: ATP synthase subunit b (159 aa).

The helical transmembrane segment at 2–22 threads the bilayer; the sequence is EFNLVTIGFTIVNFIILMLIL.

This sequence belongs to the ATPase B chain family. As to quaternary structure, F-type ATPases have 2 components, F(1) - the catalytic core - and F(0) - the membrane proton channel. F(1) has five subunits: alpha(3), beta(3), gamma(1), delta(1), epsilon(1). F(0) has three main subunits: a(1), b(2) and c(10-14). The alpha and beta chains form an alternating ring which encloses part of the gamma chain. F(1) is attached to F(0) by a central stalk formed by the gamma and epsilon chains, while a peripheral stalk is formed by the delta and b chains.

The protein localises to the cell membrane. Its function is as follows. F(1)F(0) ATP synthase produces ATP from ADP in the presence of a proton or sodium gradient. F-type ATPases consist of two structural domains, F(1) containing the extramembraneous catalytic core and F(0) containing the membrane proton channel, linked together by a central stalk and a peripheral stalk. During catalysis, ATP synthesis in the catalytic domain of F(1) is coupled via a rotary mechanism of the central stalk subunits to proton translocation. In terms of biological role, component of the F(0) channel, it forms part of the peripheral stalk, linking F(1) to F(0). This chain is ATP synthase subunit b, found in Clostridium acetobutylicum (strain ATCC 824 / DSM 792 / JCM 1419 / IAM 19013 / LMG 5710 / NBRC 13948 / NRRL B-527 / VKM B-1787 / 2291 / W).